The chain runs to 318 residues: Transaldolase (318 aa).

The active-site Schiff-base intermediate with substrate is the Lys-132.

Belongs to the transaldolase family. Type 1 subfamily. As to quaternary structure, homodimer.

It is found in the cytoplasm. The enzyme catalyses D-sedoheptulose 7-phosphate + D-glyceraldehyde 3-phosphate = D-erythrose 4-phosphate + beta-D-fructose 6-phosphate. Its pathway is carbohydrate degradation; pentose phosphate pathway; D-glyceraldehyde 3-phosphate and beta-D-fructose 6-phosphate from D-ribose 5-phosphate and D-xylulose 5-phosphate (non-oxidative stage): step 2/3. Its function is as follows. Transaldolase is important for the balance of metabolites in the pentose-phosphate pathway. This is Transaldolase from Shewanella woodyi (strain ATCC 51908 / MS32).